The chain runs to 363 residues: Proline/serine-rich coiled-coil protein 1 (363 aa).

S22 is modified (phosphoserine). Residues 38 to 41 form repeat 1; sequence PEKP. The disordered stretch occupies residues 39–67; sequence EKPLRRGLSHRSDPNAVAPAPQGVRLSLG. At L42 the chain carries Phosphoserine. The residue at position 45 (G45) is a Phosphothreonine. Residues S47, S65, S70, S98, S122, and S140 each carry the phosphoserine modification. The stretch at 68–71 is repeat 2; the sequence is PLSP. A coiled-coil region spans residues 70–94; it reads SPEKLEEILDEANRLAAQLEQCALQ. Residues 95–363 form a disordered region; it reads DRESAGEGLG…RKVAVPGPTR (269 aa). Positions 103-246 are 4 X 4 AA repeats of P-X-X-P; it reads LGPRRVKPSP…HPSPPGPPTP (144 aa). Positions 112 to 124 are enriched in basic and acidic residues; that stretch reads PRRETFVLKDSPV. Over residues 133-148 the composition is skewed to low complexity; the sequence is SLTRSTPSPSSLTPRL. Phosphothreonine is present on T145. Phosphoserine occurs at positions 186 and 190. Residues 186-196 are compositionally biased toward polar residues; the sequence is SPASSPLTRST. Residues 197-210 are compositionally biased toward low complexity; that stretch reads PPVRGRAGPSGRAA. At S212 the chain carries Phosphoserine. T215 carries the phosphothreonine modification. Tandem repeats lie at residues 238-241 and 243-246.

It belongs to the PSRC1 family. In terms of assembly, interacts with APC2. Interacts with KIF2A. Interacts with ANKRD53; recruits ANKRD53 to the spindle during mitosis. In terms of processing, phosphorylated during mitosis. As to expression, widely expressed in adult and fetal tissues, with highest expression in the adult brain and fetal thymus. Not detected in adult skeletal muscle.

Its subcellular location is the cytoplasm. It localises to the cytoskeleton. The protein localises to the spindle. It is found in the spindle pole. In terms of biological role, required for normal progression through mitosis. Required for normal congress of chromosomes at the metaphase plate, and for normal rate of chromosomal segregation during anaphase. Plays a role in the regulation of mitotic spindle dynamics. Increases the rate of turnover of microtubules on metaphase spindles, and contributes to the generation of normal tension across sister kinetochores. Recruits KIF2A and ANKRD53 to the mitotic spindle and spindle poles. May participate in p53/TP53-regulated growth suppression. This Homo sapiens (Human) protein is Proline/serine-rich coiled-coil protein 1 (PSRC1).